We begin with the raw amino-acid sequence, 181 residues long: dTDP-4-dehydrorhamnose 3,5-epimerase (181 aa).

Substrate contacts are provided by residues Arg23, Glu28, Gln47 to Asn49, and Arg59. His62 acts as the Proton acceptor in catalysis. Residues Lys72 and His119 each contribute to the substrate site. Catalysis depends on Tyr132, which acts as the Proton donor. Substrate-binding residues include Glu143 and Lys167.

Belongs to the dTDP-4-dehydrorhamnose 3,5-epimerase family. Homodimer.

It carries out the reaction dTDP-4-dehydro-6-deoxy-alpha-D-glucose = dTDP-4-dehydro-beta-L-rhamnose. It participates in carbohydrate biosynthesis; dTDP-L-rhamnose biosynthesis. It functions in the pathway bacterial outer membrane biogenesis; LPS O-antigen biosynthesis. Catalyzes the epimerization of the C3' and C5'positions of dTDP-6-deoxy-D-xylo-4-hexulose, forming dTDP-6-deoxy-L-lyxo-4-hexulose. This is dTDP-4-dehydrorhamnose 3,5-epimerase (rfbC) from Shigella flexneri.